Reading from the N-terminus, the 550-residue chain is Methionine--tRNA ligase (550 aa).

The short motif at 13–23 is the 'HIGH' region element; sequence PYANGPLHFGH. Zn(2+)-binding residues include Cys-145, Cys-148, Cys-158, and Cys-161. A 'KMSKS' region motif is present at residues 331-335; the sequence is QFSKS. Lys-334 provides a ligand contact to ATP.

It belongs to the class-I aminoacyl-tRNA synthetase family. MetG type 1 subfamily. As to quaternary structure, monomer. The cofactor is Zn(2+).

The protein localises to the cytoplasm. It catalyses the reaction tRNA(Met) + L-methionine + ATP = L-methionyl-tRNA(Met) + AMP + diphosphate. Its function is as follows. Is required not only for elongation of protein synthesis but also for the initiation of all mRNA translation through initiator tRNA(fMet) aminoacylation. This is Methionine--tRNA ligase (metG) from Chlamydia muridarum (strain MoPn / Nigg).